The primary structure comprises 263 residues: tRNA pseudouridine synthase A (263 aa).

The Nucleophile role is filled by Asp51. Tyr109 lines the substrate pocket.

Belongs to the tRNA pseudouridine synthase TruA family. As to quaternary structure, homodimer.

It carries out the reaction uridine(38/39/40) in tRNA = pseudouridine(38/39/40) in tRNA. In terms of biological role, formation of pseudouridine at positions 38, 39 and 40 in the anticodon stem and loop of transfer RNAs. The protein is tRNA pseudouridine synthase A of Pseudoalteromonas atlantica (strain T6c / ATCC BAA-1087).